We begin with the raw amino-acid sequence, 215 residues long: Octanoyltransferase (215 aa).

The region spanning 31–206 (PDSQDEIWLV…QLVKHLDYAE (176 aa)) is the BPL/LPL catalytic domain. Substrate contacts are provided by residues 70-77 (RGGQVTYH), 137-139 (SLG), and 150-152 (GLA). Cys168 functions as the Acyl-thioester intermediate in the catalytic mechanism.

It belongs to the LipB family.

Its subcellular location is the cytoplasm. The catalysed reaction is octanoyl-[ACP] + L-lysyl-[protein] = N(6)-octanoyl-L-lysyl-[protein] + holo-[ACP] + H(+). It functions in the pathway protein modification; protein lipoylation via endogenous pathway; protein N(6)-(lipoyl)lysine from octanoyl-[acyl-carrier-protein]: step 1/2. Functionally, catalyzes the transfer of endogenously produced octanoic acid from octanoyl-acyl-carrier-protein onto the lipoyl domains of lipoate-dependent enzymes. Lipoyl-ACP can also act as a substrate although octanoyl-ACP is likely to be the physiological substrate. This is Octanoyltransferase from Pseudomonas putida (strain W619).